Consider the following 350-residue polypeptide: Methylthioribose-1-phosphate isomerase (350 aa).

Substrate-binding positions include 47–49, R89, and Q196; that span reads RGA. D237 (proton donor) is an active-site residue. Substrate is bound at residue 247 to 248; it reads NK.

This sequence belongs to the eIF-2B alpha/beta/delta subunits family. MtnA subfamily.

It carries out the reaction 5-(methylsulfanyl)-alpha-D-ribose 1-phosphate = 5-(methylsulfanyl)-D-ribulose 1-phosphate. It functions in the pathway amino-acid biosynthesis; L-methionine biosynthesis via salvage pathway; L-methionine from S-methyl-5-thio-alpha-D-ribose 1-phosphate: step 1/6. Functionally, catalyzes the interconversion of methylthioribose-1-phosphate (MTR-1-P) into methylthioribulose-1-phosphate (MTRu-1-P). In Nitratidesulfovibrio vulgaris (strain DSM 19637 / Miyazaki F) (Desulfovibrio vulgaris), this protein is Methylthioribose-1-phosphate isomerase.